Consider the following 246-residue polypeptide: MYNLCYIQNLLEYQIAAVEVGQHLYWEIGNFEVHAQVLITSWIVIGLILGLTFLATQNLQFIPTQNQNLIEYILEFIRDLTKSQIGESEYRPWIPFIGTMFLFIFVSNWSGALIPFKLVQLPNGELAAPTNDINTTVALALLTSVAYFYAGLRKKGLSYFGKYIKPTPILLPINILEDFTKPLSLSFRLFGNILADELVVAVLVSLVPLVVPIPMMFLGLFTSAIQALIFATLAAAYIGESIEDHH.

The next 5 membrane-spanning stretches (helical) occupy residues 35 to 55, 94 to 114, 132 to 152, 198 to 218, and 219 to 239; these read AQVL…TFLA, IPFI…GALI, DINT…YAGL, LVVA…MMFL, and GLFT…AYIG.

The protein belongs to the ATPase A chain family. In terms of assembly, F-type ATPases have 2 components, CF(1) - the catalytic core - and CF(0) - the membrane proton channel. CF(1) has five subunits: alpha(3), beta(3), gamma(1), delta(1), epsilon(1). CF(0) has four main subunits: a, b, b' and c.

The protein localises to the plastid. It is found in the chloroplast thylakoid membrane. Its function is as follows. Key component of the proton channel; it plays a direct role in the translocation of protons across the membrane. The sequence is that of ATP synthase subunit a, chloroplastic from Chara vulgaris (Common stonewort).